The chain runs to 201 residues: Small ribosomal subunit protein uS4 (201 aa).

Residues Ala93–Asp153 form the S4 RNA-binding domain.

This sequence belongs to the universal ribosomal protein uS4 family. As to quaternary structure, part of the 30S ribosomal subunit. Contacts protein S5. The interaction surface between S4 and S5 is involved in control of translational fidelity.

Its function is as follows. One of the primary rRNA binding proteins, it binds directly to 16S rRNA where it nucleates assembly of the body of the 30S subunit. Functionally, with S5 and S12 plays an important role in translational accuracy. The protein is Small ribosomal subunit protein uS4 of Flavobacterium psychrophilum (strain ATCC 49511 / DSM 21280 / CIP 103535 / JIP02/86).